The sequence spans 302 residues: 1D-myo-inositol 2-acetamido-2-deoxy-alpha-D-glucopyranoside deacetylase (302 aa).

Positions 12, 15, and 147 each coordinate Zn(2+).

It belongs to the MshB deacetylase family. The cofactor is Zn(2+).

The enzyme catalyses 1D-myo-inositol 2-acetamido-2-deoxy-alpha-D-glucopyranoside + H2O = 1D-myo-inositol 2-amino-2-deoxy-alpha-D-glucopyranoside + acetate. In terms of biological role, catalyzes the deacetylation of 1D-myo-inositol 2-acetamido-2-deoxy-alpha-D-glucopyranoside (GlcNAc-Ins) in the mycothiol biosynthesis pathway. The sequence is that of 1D-myo-inositol 2-acetamido-2-deoxy-alpha-D-glucopyranoside deacetylase from Thermobispora bispora (strain ATCC 19993 / DSM 43833 / CBS 139.67 / JCM 10125 / KCTC 9307 / NBRC 14880 / R51).